A 260-amino-acid chain; its full sequence is Creatinine amidohydrolase (260 aa).

Residue Glu-34 coordinates Mn(2+). Zn(2+)-binding residues include Glu-34, His-36, and Asp-45. A Mn(2+)-binding site is contributed by Asp-45. Ser-78 contributes to the creatine binding site. His-120 contacts Mn(2+). His-120 serves as a coordination point for Zn(2+). Residues Tyr-121, Trp-174, Asp-175, and His-178 each coordinate creatine. Residue Glu-183 participates in Zn(2+) binding.

The protein belongs to the creatininase superfamily. Homohexamer; trimer of dimers. Zn(2+) is required as a cofactor. It depends on Mn(2+) as a cofactor.

The enzyme catalyses creatinine + H2O = creatine. It functions in the pathway amine and polyamine degradation; creatinine degradation. Is markedly inactivated in vitro by heavy metal ions, N-bromosuccinimide, ethoxyformic anhydride, and dye-sensitized photooxidation. Its function is as follows. Cyclic amidohydrolase that catalyzes the reversible conversion of creatinine to creatine. Is also active toward glycocyamidine, though the reaction rate is very low, but it is completely inert toward hydantoin and its derivatives. In Pseudomonas putida (Arthrobacter siderocapsulatus), this protein is Creatinine amidohydrolase (crnA).